The primary structure comprises 62 residues: Small ribosomal subunit protein bS21 (62 aa).

It belongs to the bacterial ribosomal protein bS21 family.

This Mycoplasma genitalium (strain ATCC 33530 / DSM 19775 / NCTC 10195 / G37) (Mycoplasmoides genitalium) protein is Small ribosomal subunit protein bS21 (rpsU).